The primary structure comprises 212 residues: Large ribosomal subunit protein uL3 (212 aa).

Over residues 139 to 153 (LSHRVTGSIGQNQTP) the composition is skewed to polar residues. Residues 139 to 161 (LSHRVTGSIGQNQTPGKVFKGKK) are disordered. Residue Gln151 is modified to N5-methylglutamine.

Belongs to the universal ribosomal protein uL3 family. Part of the 50S ribosomal subunit. Forms a cluster with proteins L14 and L19. Methylated by PrmB.

Functionally, one of the primary rRNA binding proteins, it binds directly near the 3'-end of the 23S rRNA, where it nucleates assembly of the 50S subunit. The protein is Large ribosomal subunit protein uL3 of Baumannia cicadellinicola subsp. Homalodisca coagulata.